A 141-amino-acid polypeptide reads, in one-letter code: Putative pre-16S rRNA nuclease (141 aa).

This sequence belongs to the YqgF nuclease family.

It localises to the cytoplasm. Functionally, could be a nuclease involved in processing of the 5'-end of pre-16S rRNA. This Shewanella oneidensis (strain ATCC 700550 / JCM 31522 / CIP 106686 / LMG 19005 / NCIMB 14063 / MR-1) protein is Putative pre-16S rRNA nuclease.